A 336-amino-acid chain; its full sequence is Holliday junction branch migration complex subunit RuvB (336 aa).

Positions 1-182 (MKERIVNLET…FGMSFRMQFY (182 aa)) are large ATPase domain (RuvB-L). ATP is bound by residues Leu-21, Arg-22, Gly-63, Lys-66, Thr-67, Ser-68, 129 to 131 (EDF), Arg-172, Tyr-182, and Arg-219. Thr-67 serves as a coordination point for Mg(2+). Residues 183 to 253 (SPSELALIIK…ITLHALNELG (71 aa)) are small ATPAse domain (RuvB-S). Residues 256 to 336 (ELGFDEADLA…IPTLKSQSLF (81 aa)) form a head domain (RuvB-H) region. 2 residues coordinate DNA: Arg-310 and Arg-315.

Belongs to the RuvB family. As to quaternary structure, homohexamer. Forms an RuvA(8)-RuvB(12)-Holliday junction (HJ) complex. HJ DNA is sandwiched between 2 RuvA tetramers; dsDNA enters through RuvA and exits via RuvB. An RuvB hexamer assembles on each DNA strand where it exits the tetramer. Each RuvB hexamer is contacted by two RuvA subunits (via domain III) on 2 adjacent RuvB subunits; this complex drives branch migration. In the full resolvosome a probable DNA-RuvA(4)-RuvB(12)-RuvC(2) complex forms which resolves the HJ.

The protein resides in the cytoplasm. The enzyme catalyses ATP + H2O = ADP + phosphate + H(+). Its function is as follows. The RuvA-RuvB-RuvC complex processes Holliday junction (HJ) DNA during genetic recombination and DNA repair, while the RuvA-RuvB complex plays an important role in the rescue of blocked DNA replication forks via replication fork reversal (RFR). RuvA specifically binds to HJ cruciform DNA, conferring on it an open structure. The RuvB hexamer acts as an ATP-dependent pump, pulling dsDNA into and through the RuvAB complex. RuvB forms 2 homohexamers on either side of HJ DNA bound by 1 or 2 RuvA tetramers; 4 subunits per hexamer contact DNA at a time. Coordinated motions by a converter formed by DNA-disengaged RuvB subunits stimulates ATP hydrolysis and nucleotide exchange. Immobilization of the converter enables RuvB to convert the ATP-contained energy into a lever motion, pulling 2 nucleotides of DNA out of the RuvA tetramer per ATP hydrolyzed, thus driving DNA branch migration. The RuvB motors rotate together with the DNA substrate, which together with the progressing nucleotide cycle form the mechanistic basis for DNA recombination by continuous HJ branch migration. Branch migration allows RuvC to scan DNA until it finds its consensus sequence, where it cleaves and resolves cruciform DNA. In Helicobacter acinonychis (strain Sheeba), this protein is Holliday junction branch migration complex subunit RuvB.